Reading from the N-terminus, the 153-residue chain is MNNYQLTINEVIEIINRNTDINKLVAKKDNLYPTDLYDLDKQQLIAIILNSDFALSSIKRALLEVTVEELREQDNDDDLDEIDNELYEGAEAADVPRETIVKVFEADKSIVTFNGEKLKHYVNVDDNSSSVDEVKKIAKEISEHDFNENKENK.

It belongs to the phi29likevirus protein p56 family. Homodimer. Interacts with the histone-like protein p6; this interaction optimizes the binding of protein p6 at the viral DNA ends, thus favoring the initiation of replication.

Involved in the replication of viral DNA. It is required at the very beginning of the virus amplification, conditions in which a low number of viral DNA molecules enter the host cell, possibly to recruit the limiting amount of initiation factors at the replication origins. Once the infection process is established and the other replication proteins reach optimal concentration, it becomes dispensable. Optimizes the binding of protein p6 at the viral DNA ends, thus favoring the initiation of replication. The polypeptide is DNA replication protein 17 (17) (Bacillus subtilis (Bacteriophage phi-15)).